A 436-amino-acid polypeptide reads, in one-letter code: 3-ketoacyl-CoA thiolase (436 aa).

Cys99 functions as the Acyl-thioester intermediate in the catalytic mechanism. Residues His392 and Cys422 each act as proton acceptor in the active site.

Belongs to the thiolase-like superfamily. Thiolase family. In terms of assembly, heterotetramer of two alpha chains (FadJ) and two beta chains (FadI).

Its subcellular location is the cytoplasm. The enzyme catalyses an acyl-CoA + acetyl-CoA = a 3-oxoacyl-CoA + CoA. The protein operates within lipid metabolism; fatty acid beta-oxidation. Catalyzes the final step of fatty acid oxidation in which acetyl-CoA is released and the CoA ester of a fatty acid two carbons shorter is formed. The polypeptide is 3-ketoacyl-CoA thiolase (Shewanella halifaxensis (strain HAW-EB4)).